The primary structure comprises 115 residues: Large ribosomal subunit protein uL22 (115 aa).

Belongs to the universal ribosomal protein uL22 family. In terms of assembly, part of the 50S ribosomal subunit.

This protein binds specifically to 23S rRNA; its binding is stimulated by other ribosomal proteins, e.g. L4, L17, and L20. It is important during the early stages of 50S assembly. It makes multiple contacts with different domains of the 23S rRNA in the assembled 50S subunit and ribosome. In terms of biological role, the globular domain of the protein is located near the polypeptide exit tunnel on the outside of the subunit, while an extended beta-hairpin is found that lines the wall of the exit tunnel in the center of the 70S ribosome. The chain is Large ribosomal subunit protein uL22 from Ligilactobacillus salivarius (strain UCC118) (Lactobacillus salivarius).